Consider the following 89-residue polypeptide: Large ribosomal subunit protein bL31B (89 aa).

This sequence belongs to the bacterial ribosomal protein bL31 family. Type B subfamily. In terms of assembly, part of the 50S ribosomal subunit.

The polypeptide is Large ribosomal subunit protein bL31B (Pseudomonas fluorescens (strain ATCC BAA-477 / NRRL B-23932 / Pf-5)).